The following is an 85-amino-acid chain: Probable small nuclear ribonucleoprotein G (85 aa).

Positions 6–78 constitute a Sm domain; that stretch reads QADPDLTKLL…ILLMEPLESM (73 aa).

Belongs to the snRNP Sm proteins family. Core component of the spliceosomal U1, U2, U4 and U5 small nuclear ribonucleoproteins (snRNPs), the building blocks of the spliceosome. Most spliceosomal snRNPs contain a common set of Sm proteins, SNRPB, SNRPD1, SNRPD2, SNRPD3, SNRPE, SNRPF and SNRPG that assemble in a heptameric protein ring on the Sm site of the small nuclear RNA to form the core snRNP. Component of the U1 snRNP. Component of the U4/U6-U5 tri-snRNP complex. Component of the U7 snRNP complex. Component of the U11/U12 snRNPs that are part of the U12-type spliceosome.

It localises to the cytoplasm. Its subcellular location is the cytosol. The protein localises to the nucleus. In terms of biological role, plays a role in pre-mRNA splicing as a core component of the spliceosomal U1, U2, U4 and U5 small nuclear ribonucleoproteins (snRNPs), the building blocks of the spliceosome. Component of both the pre-catalytic spliceosome B complex and activated spliceosome C complexes. Is also a component of the minor U12 spliceosome. This is Probable small nuclear ribonucleoprotein G (snrpG) from Dictyostelium discoideum (Social amoeba).